Consider the following 109-residue polypeptide: Putative double-stranded DNA mimic protein Ent638_2296 (109 aa).

This sequence belongs to the putative dsDNA mimic protein family.

Functionally, may act as a double-stranded DNA (dsDNA) mimic. Probably regulates the activity of a dsDNA-binding protein. The protein is Putative double-stranded DNA mimic protein Ent638_2296 of Enterobacter sp. (strain 638).